A 337-amino-acid polypeptide reads, in one-letter code: Trace amine-associated receptor 5 (337 aa).

Residues 1-38 (MRAVLLPGSGEQPTAFCYQVNGSCPRTVHPLAIQVVIY) are Extracellular-facing. N-linked (GlcNAc...) asparagine glycosylation occurs at N21. 2 disulfides stabilise this stretch: C24–C188 and C99–C192. The chain crosses the membrane as a helical span at residues 39 to 59 (LACAVGVLITVLGNLFVVFAV). Residues 60 to 70 (SYFKVLHTPTN) are Cytoplasmic-facing. Residues 71 to 91 (FLLLSLALADMLLGLLVLPLS) traverse the membrane as a helical segment. At 92–109 (TVRSVESCWFFGDFLCRL) the chain is on the extracellular side. The helical transmembrane segment at 110-130 (HTYLDTLFCLTSIFHLCFISI) threads the bilayer. Residues 131–154 (DRHCAICDPLLYPSKFTVRTALRY) lie on the Cytoplasmic side of the membrane. The chain crosses the membrane as a helical span at residues 155 to 175 (IVAGWGIPAAYTAFFLYTDVV). Residues 176 to 189 (ERALSQWLEEMPCV) are extracellular Loop 2 (ECL2). Over 176 to 204 (ERALSQWLEEMPCVGSCQLLFNKFWGWLN) the chain is Extracellular. Residues 205–225 (FPAFFVPCLIMISLYLKIFVV) traverse the membrane as a helical segment. The Cytoplasmic segment spans residues 226 to 253 (ATRQAQQIRTLSQSLAGAVKRERKAAKT). Residues 254–274 (LGIAVGIYLVCWLPFTVDTLV) form a helical membrane-spanning segment. At 275–284 (DSLLNFITPP) the chain is on the extracellular side. A helical transmembrane segment spans residues 285-307 (LVFDIFIWFAYFNSACNPIIYVF). The Cytoplasmic segment spans residues 308–337 (SYRWFRKALKLLLSREIFSPRTPTVDLYHD).

Belongs to the G-protein coupled receptor 1 family. Specifically expressed in neurons of the olfactory epithelium, to discrete glomeruli predominantly localized to a confined bulb region. Present in the dorsal area of the main olfactory epithelium. Also present in the limbic brain areas receiving projection from the olfactory system and involved in the regulation of emotions. Also expressed in some brain regions outside the olfactory epithelium, such as the hippocampus, cerebellum, cortex, raphe nuclei, hypothalamus, and habenula.

The protein localises to the cell membrane. Inhibited by 1-[(5,5- diphenyloxolan-2-yl)methyl]-4-(2-methoxyphenyl)piperazine and N-[(2,2-diphenyl-1,3-dioxolan-4-yl)methyl]-2-(2- methoxyphenoxy)ethan-1-amine small molecules. Olfactory receptor specific for trimethylamine, a trace amine enriched in the urine of male mice, playing a role in social behavior. Also activated by N-methylpiperidine. Trimethylamine is present at high concentration in the urine of male mice after puberty and acts as an attractant. Trimethylamine-binding causes a conformation change that triggers signaling via G(s)-class of G alpha proteins (GNAL or GNAS). Also required to provide olfactory input into limbic brain areas to regulate emotional behaviors likely via modulation of the serotonin system. In Mus musculus (Mouse), this protein is Trace amine-associated receptor 5.